The sequence spans 149 residues: UPF0310 protein msl3206 (149 aa).

Belongs to the UPF0310 family.

The protein is UPF0310 protein msl3206 of Mesorhizobium japonicum (strain LMG 29417 / CECT 9101 / MAFF 303099) (Mesorhizobium loti (strain MAFF 303099)).